A 454-amino-acid polypeptide reads, in one-letter code: MSDNDTIVAQATPPGRGGVGILRISGLKAREVAETVLGKLPKPRYADYLPFKDADGSVLDQGIALWFPGPNSFTGEDVLELQGHGGPVILDLLLKRILTIPGLRIARPGEFSERAFLNDKLDLAQAEAIADLIDASSEQAARSALNSLQGAFSARVNHLVEALTHLRIYVEAAIDFPDEEIDFLSDGKIEAQLNDVIADLDAVRAEARQGSLLREGMKVVIAGRPNAGKSSLLNALAGREAAIVTDIAGTTRDVLREHIHIDGMPLHIIDTAGLREASDEVERIGIERAWQEIEQADRVLFMVDGTTTDAVDPAEIWPEFIARLPAKLPITVVRNKADITGETLGMSELNGHALIRLSARTGEGVDVLRNHLKQSMGFDTNMEGGFLARRRHLQALEQAAEHLQQGKAQLLGAWAGELLAEELRLAQQNLSEITGEFTSDDLLGRIFSSFCIGK.

The (6S)-5-formyl-5,6,7,8-tetrahydrofolate site is built by Arg23, Glu80, and Lys120. In terms of domain architecture, TrmE-type G spans Gly216 to Gly377. Asn226 contacts K(+). GTP-binding positions include Asn226–Ser231, Thr245–Thr251, Asp270–Gly273, Asn335–Asp338, and Ser358–Arg360. Ser230 contacts Mg(2+). The K(+) site is built by Thr245, Ile247, and Thr250. Thr251 lines the Mg(2+) pocket. Lys454 contributes to the (6S)-5-formyl-5,6,7,8-tetrahydrofolate binding site.

This sequence belongs to the TRAFAC class TrmE-Era-EngA-EngB-Septin-like GTPase superfamily. TrmE GTPase family. As to quaternary structure, homodimer. Heterotetramer of two MnmE and two MnmG subunits. K(+) serves as cofactor.

The protein localises to the cytoplasm. Exhibits a very high intrinsic GTPase hydrolysis rate. Involved in the addition of a carboxymethylaminomethyl (cmnm) group at the wobble position (U34) of certain tRNAs, forming tRNA-cmnm(5)s(2)U34. The chain is tRNA modification GTPase MnmE from Escherichia coli O127:H6 (strain E2348/69 / EPEC).